The sequence spans 455 residues: GTPase Der (455 aa).

EngA-type G domains lie at 4–169 (PIVA…PKDQ) and 178–355 (LRVS…GQHQ). GTP-binding positions include 10–17 (GRPNVGKS), 57–61 (DTGGL), 120–123 (NKLE), 184–191 (GRPNVGKS), 233–237 (DTAGI), and 298–301 (NKWD). In terms of domain architecture, KH-like spans 356-441 (RRVSTSVLNE…PVRFIFRGKP (86 aa)).

This sequence belongs to the TRAFAC class TrmE-Era-EngA-EngB-Septin-like GTPase superfamily. EngA (Der) GTPase family. In terms of assembly, associates with the 50S ribosomal subunit.

Functionally, GTPase that plays an essential role in the late steps of ribosome biogenesis. The sequence is that of GTPase Der from Gloeobacter violaceus (strain ATCC 29082 / PCC 7421).